Consider the following 607-residue polypeptide: Large ribosomal subunit assembly factor BipA (607 aa).

A tr-type G domain is found at 3–198; it reads HSIRNIAIIA…SIIKYAPAPN (196 aa). Residues 15–20 and 128–131 each bind GTP; these read DHGKTT and NKID.

It belongs to the TRAFAC class translation factor GTPase superfamily. Classic translation factor GTPase family. BipA subfamily. Monomer.

The protein localises to the cytoplasm. The catalysed reaction is GTP + H2O = GDP + phosphate + H(+). A 50S ribosomal subunit assembly protein with GTPase activity, required for 50S subunit assembly at low temperatures, may also play a role in translation. Binds GTP and analogs. Binds the 70S ribosome between the 30S and 50S subunits, in a similar position as ribosome-bound EF-G; it contacts a number of ribosomal proteins, both rRNAs and the A-site tRNA. This chain is Large ribosomal subunit assembly factor BipA, found in Buchnera aphidicola subsp. Acyrthosiphon pisum (strain APS) (Acyrthosiphon pisum symbiotic bacterium).